We begin with the raw amino-acid sequence, 154 residues long: Ribonuclease H (154 aa).

The RNase H type-1 domain occupies Glu-5–Asp-146. Mg(2+) is bound by residues Asp-14, Glu-52, Asp-74, and Asp-138.

Belongs to the RNase H family. In terms of assembly, monomer. Requires Mg(2+) as cofactor.

The protein resides in the cytoplasm. It carries out the reaction Endonucleolytic cleavage to 5'-phosphomonoester.. In terms of biological role, endonuclease that specifically degrades the RNA of RNA-DNA hybrids. The sequence is that of Ribonuclease H from Coxiella burnetii (strain CbuK_Q154) (Coxiella burnetii (strain Q154)).